Reading from the N-terminus, the 408-residue chain is Peptidase T (408 aa).

H78 lines the Zn(2+) pocket. Residue D80 is part of the active site. D140 lines the Zn(2+) pocket. Catalysis depends on E173, which acts as the Proton acceptor. E174, D196, and H379 together coordinate Zn(2+).

This sequence belongs to the peptidase M20B family. Requires Zn(2+) as cofactor.

The protein resides in the cytoplasm. The enzyme catalyses Release of the N-terminal residue from a tripeptide.. Cleaves the N-terminal amino acid of tripeptides. The protein is Peptidase T of Escherichia coli (strain K12 / MC4100 / BW2952).